A 681-amino-acid chain; its full sequence is Hydroxyproline O-galactosyltransferase GALT6 (681 aa).

Topologically, residues 1-28 (MRKPKLSKLERLEKFDIFVSLSKQRSVQ) are cytoplasmic. Residues 29–49 (ILMAVGLLYMLLITFEIPFVF) traverse the membrane as a helical; Signal-anchor for type II membrane protein segment. Over 50 to 681 (KTGLSSLSQD…TGKPQCCNMR (632 aa)) the chain is Lumenal. The tract at residues 57–80 (SQDPLTRPEKHNSQRELQERRAPT) is disordered. A compositionally biased stretch (basic and acidic residues) spans 62-78 (TRPEKHNSQRELQERRA). Residues 187 to 401 (NIMELPCGLT…DIDVHSVFAG (215 aa)) enclose the Galectin domain. Asparagine 629 carries N-linked (GlcNAc...) asparagine glycosylation.

This sequence belongs to the glycosyltransferase 31 family. Requires Mn(2+) as cofactor. In terms of tissue distribution, expressed in junveile leaves and stems, and at lower levels in cauline leaves and siliques.

It is found in the golgi apparatus membrane. It functions in the pathway protein modification; protein glycosylation. Its function is as follows. Possesses hydroxyproline O-galactosyltransferase activity. Transfers galactose from UDP-galactose to hydroxyproline residues in the arabinogalactan proteins (AGPs). Is specific for AGPs containing non-contiguous peptidyl hydroxyproline residues. Utilizes UDP-galactose solely as sugar donor. The addition of galactose onto the peptidyl hydroxyproline residues in AGP core proteins represents the first committed step in arabinogalactan polysaccharide addition. AGP glycans play essential roles in both vegetative and reproductive plant growth. This Arabidopsis thaliana (Mouse-ear cress) protein is Hydroxyproline O-galactosyltransferase GALT6.